Here is a 413-residue protein sequence, read N- to C-terminus: Tyrosine--tRNA ligase (413 aa).

A 'HIGH' region motif is present at residues 57–66; the sequence is PTAPDIHLGH. Positions 241–245 match the 'KMSKS' region motif; that stretch reads KMSKS. Lys-244 is an ATP binding site. One can recognise an S4 RNA-binding domain in the interval 351 to 412; it reads VWLPRLMVQA…GKRKFARLHT (62 aa).

It belongs to the class-I aminoacyl-tRNA synthetase family. TyrS type 2 subfamily. As to quaternary structure, homodimer.

The protein resides in the cytoplasm. The enzyme catalyses tRNA(Tyr) + L-tyrosine + ATP = L-tyrosyl-tRNA(Tyr) + AMP + diphosphate + H(+). In terms of biological role, catalyzes the attachment of tyrosine to tRNA(Tyr) in a two-step reaction: tyrosine is first activated by ATP to form Tyr-AMP and then transferred to the acceptor end of tRNA(Tyr). This Moorella thermoacetica (strain ATCC 39073 / JCM 9320) protein is Tyrosine--tRNA ligase.